Consider the following 488-residue polypeptide: UDP-N-acetylmuramate--L-alanine ligase (488 aa).

An ATP-binding site is contributed by 122–128 (GTHGKTT).

The protein belongs to the MurCDEF family.

The protein localises to the cytoplasm. It carries out the reaction UDP-N-acetyl-alpha-D-muramate + L-alanine + ATP = UDP-N-acetyl-alpha-D-muramoyl-L-alanine + ADP + phosphate + H(+). It participates in cell wall biogenesis; peptidoglycan biosynthesis. Cell wall formation. The protein is UDP-N-acetylmuramate--L-alanine ligase of Mycobacterium ulcerans (strain Agy99).